The sequence spans 90 residues: Translation initiation factor IF-1 (90 aa).

The S1-like domain occupies 15–90; it reads KKQKRKKEEV…TLGRIVFRHK (76 aa).

The protein belongs to the IF-1 family. As to quaternary structure, component of the 30S ribosomal translation pre-initiation complex which assembles on the 30S ribosome in the order IF-2 and IF-3, IF-1 and N-formylmethionyl-tRNA(fMet); mRNA recruitment can occur at any time during PIC assembly.

It is found in the cytoplasm. In terms of biological role, one of the essential components for the initiation of protein synthesis. Stabilizes the binding of IF-2 and IF-3 on the 30S subunit to which N-formylmethionyl-tRNA(fMet) subsequently binds. Helps modulate mRNA selection, yielding the 30S pre-initiation complex (PIC). Upon addition of the 50S ribosomal subunit IF-1, IF-2 and IF-3 are released leaving the mature 70S translation initiation complex. The polypeptide is Translation initiation factor IF-1 (Mycoplasma sp).